The primary structure comprises 107 residues: Proteinase inhibitor 1 (107 aa).

Residues 1–23 (MELKFAHIIVFFLLATSFETLMA) form the signal peptide. A propeptide spanning residues 24–36 (RKESDGPEVIQLL) is cleaved from the precursor.

It belongs to the protease inhibitor I13 (potato type I serine protease inhibitor) family.

This Solanum tuberosum (Potato) protein is Proteinase inhibitor 1.